Reading from the N-terminus, the 646-residue chain is Lamin-1 (646 aa).

A head region spans residues Met1–Phe85. Residues Met1–Leu94 are disordered. Composition is skewed to polar residues over residues Ala48–Leu67 and Gln75–Arg87. Residues Ser86–Gln126 form a coil 1A region. Positions Glu90 to Leu446 constitute an IF rod domain. Positions Gln127 to Ile137 are linker 1. The tract at residues Gly138–Val281 is coil 1B. A compositionally biased stretch (polar residues) spans Val281–Ser301. Residues Val281–Val304 form a disordered region. The interval Thr282–Asp299 is linker 2. The coil 2 stretch occupies residues Phe300–Leu439. A tail region spans residues Ser440 to Leu646. Residues Val457–Tyr471 carry the Nuclear localization signal motif. Residues Gly476–Gly487 are compositionally biased toward low complexity. The tract at residues Gly476–Ser513 is disordered. A compositionally biased stretch (polar residues) spans His488 to Thr505. The 115-residue stretch at Lys504–Ala618 folds into the LTD domain.

It belongs to the intermediate filament family.

It localises to the nucleus. Functionally, intermediate filament (IF) protein, component of the nuclear lamina, a fibrous layer on the nucleoplasmic side of the inner nuclear membrane, which is thought to provide a framework for the nuclear envelope. The chain is Lamin-1 from Hypsibius exemplaris (Freshwater tardigrade).